We begin with the raw amino-acid sequence, 1493 residues long: Protein Shroom4 (1493 aa).

The 83-residue stretch at 10 to 92 folds into the PDZ domain; sequence YVPVQLQGGA…ILKLIVRRRN (83 aa). A disordered region spans residues 202-282; sequence CALSLRPEEP…PPQPPVRRDS (81 aa). Polar residues-rich tracts occupy residues 234-243 and 249-262; these read AETSGGSRRT and TPSS…QEGY. Residue Ser-411 is modified to Phosphoserine. The interval 430–695 is disordered; it reads GSKGMELPPV…SPGQRPGQSS (266 aa). Basic and acidic residues-rich tracts occupy residues 470 to 484 and 498 to 509; these read QSSK…DDRS and GEADGHPSEKGF. The span at 513 to 547 shows a compositional bias: polar residues; sequence NRTSRAASELANQQPSASGSLVQQATDCSSTTKAA. Ser-729 carries the phosphoserine modification. Disordered stretches follow at residues 740 to 759 and 781 to 813; these read AAME…ASTA and SKSL…NFQP. Polar residues predominate over residues 782–802; sequence KSLSTSHLPGLTTHSNKTFTQ. Ser-1019 carries the phosphoserine modification. Disordered regions lie at residues 1117–1170, 1187–1206, 1214–1236, and 1246–1265; these read AAQQ…ETSG, SFGH…AEQE, DFLP…PCYY, and GQEA…PPSG. A compositionally biased stretch (low complexity) spans 1118-1129; sequence AQQQKQQQQQQK. A compositionally biased stretch (acidic residues) spans 1132–1159; that stretch reads EEEEEEEEEEEEEEEEEEEEAEEEEEEL. Residues 1213-1492 form the ASD2 domain; it reads SDFLPPIRGH…RESLLLGPSN (280 aa). Residues 1382-1488 are a coiled coil; that stretch reads LSGRLARVEN…LKCLRESLLL (107 aa).

It belongs to the shroom family. Interacts directly with F-actin. As to expression, expressed in all fetal and adult tissues investigated. Expressed in adult heart, brain, placenta, lung, liver, skeletal muscle, kidney and pancreas. In brain regions detected in cerebellum, cerebral cortex, medulla, spinal cord, occipital pole, frontal lobe, temporal lobe and putamen. The expression is strongest in the medulla and weakest in the cerebral cortex.

It is found in the cytoplasm. It localises to the cytoskeleton. In terms of biological role, probable regulator of cytoskeletal architecture that plays an important role in development. May regulate cellular and cytoskeletal architecture by modulating the spatial distribution of myosin II. This chain is Protein Shroom4 (SHROOM4), found in Homo sapiens (Human).